We begin with the raw amino-acid sequence, 276 residues long: Tryptophan synthase alpha chain (276 aa).

Residues Glu-49 and Asp-60 each act as proton acceptor in the active site.

This sequence belongs to the TrpA family. As to quaternary structure, tetramer of two alpha and two beta chains.

It catalyses the reaction (1S,2R)-1-C-(indol-3-yl)glycerol 3-phosphate + L-serine = D-glyceraldehyde 3-phosphate + L-tryptophan + H2O. Its pathway is amino-acid biosynthesis; L-tryptophan biosynthesis; L-tryptophan from chorismate: step 5/5. Its function is as follows. The alpha subunit is responsible for the aldol cleavage of indoleglycerol phosphate to indole and glyceraldehyde 3-phosphate. This is Tryptophan synthase alpha chain from Acidiphilium cryptum (strain JF-5).